The primary structure comprises 430 residues: MSSRSPRPPPRRCRRRLPRPSCCCCCCRRSHLNEDTGRFVLLAALIGLYLVAGATVFSALESPGEAEARARWGATLRNFSAAHGVAEPELRAFLRHYEAALAAGVRADALRPRWDFPGAFYFVGTVVSTIGFGMTTPATVGGKAFLIAYGLFGCAGTILFFNLFLERIISLLAFIMRACRERQLRRSGLLPATFRRGSALSEADSLAGWKPSVYHVLLILGLFAVLLACCASAMYTSVEGWDYVDSLYFCFVTFSTIGFGDLVSSQHAAYRNQGLYRLGNFLFILLGVCCIYSLFNVISILIKQVLNWMLRKLSCRCCTRCCPAPGAPLSRRNAITPGSRLRRRLAALGTDPAARDSDAEGRRLSGELISMRDLTASNKVSLALLQKQLSETANGYPRSVCVNTRQNGFSGGVGALGIMNNRLAETSASR.

Residues 1–38 (MSSRSPRPPPRRCRRRLPRPSCCCCCCRRSHLNEDTGR) lie on the Cytoplasmic side of the membrane. Positions 11-16 (RRCRRR) are ER retention/retrieval signal. Residues 39-59 (FVLLAALIGLYLVAGATVFSA) traverse the membrane as a helical segment. N-linked (GlcNAc...) asparagine glycosylation is present at Asn78. Positions 114 to 134 (WDFPGAFYFVGTVVSTIGFGM) form an intramembrane region, pore-forming. K(+) is bound by residues Thr129, Ile130, and Gly131. A selectivity filter 1 region spans residues 129-134 (TIGFGM). The chain crosses the membrane as a helical span at residues 145-165 (FLIAYGLFGCAGTILFFNLFL). At 166-212 (ERIISLLAFIMRACRERQLRRSGLLPATFRRGSALSEADSLAGWKPS) the chain is on the cytoplasmic side. Residues 213-233 (VYHVLLILGLFAVLLACCASA) traverse the membrane as a helical segment. Positions 243–263 (YVDSLYFCFVTFSTIGFGDLV) form an intramembrane region, pore-forming. 4 residues coordinate K(+): Thr256, Ile257, Gly258, and Phe259. The selectivity filter 2 stretch occupies residues 256–261 (TIGFGD). Residues 282–302 (LFILLGVCCIYSLFNVISILI) form a helical membrane-spanning segment. Topologically, residues 303 to 430 (KQVLNWMLRK…NRLAETSASR (128 aa)) are cytoplasmic.

The protein belongs to the two pore domain potassium channel (TC 1.A.1.8) family. As to quaternary structure, homodimer. Heterodimer with KCNK13. Highly expressed in most brain regions. Also expressed in other tissues such as lung, kidney, liver, stomach and spleen.

It localises to the cell membrane. It is found in the endoplasmic reticulum membrane. The enzyme catalyses K(+)(in) = K(+)(out). In terms of biological role, k(+) channel subunit that may homo- and heterodimerize to form functional channels with distinct regulatory and gating properties. Can heterodimerize with KCNK13 subunit to conduct K(+) outward rectifying currents at the plasma membrane. The homodimers are mainly retained in the endoplasmic reticulum compartment and may be targeted to the cell surface upon phosphorylation or other activation signals yet to be elucidated. This Rattus norvegicus (Rat) protein is Potassium channel subfamily K member 12 (Kcnk12).